The primary structure comprises 147 residues: uncharacterized protein (147 aa).

A disordered region spans residues 30–102; that stretch reads GRCEQVALSS…TPPTRPESIF (73 aa). Over residues 62 to 71 the composition is skewed to polar residues; sequence RPSTGETFVQ.

This is an uncharacterized protein from Homo sapiens (Human).